Consider the following 268-residue polypeptide: 3-deoxy-manno-octulosonate cytidylyltransferase (268 aa).

It belongs to the KdsB family.

The protein localises to the cytoplasm. The catalysed reaction is 3-deoxy-alpha-D-manno-oct-2-ulosonate + CTP = CMP-3-deoxy-beta-D-manno-octulosonate + diphosphate. It participates in nucleotide-sugar biosynthesis; CMP-3-deoxy-D-manno-octulosonate biosynthesis; CMP-3-deoxy-D-manno-octulosonate from 3-deoxy-D-manno-octulosonate and CTP: step 1/1. It functions in the pathway bacterial outer membrane biogenesis; lipopolysaccharide biosynthesis. Its function is as follows. Activates KDO (a required 8-carbon sugar) for incorporation into bacterial lipopolysaccharide in Gram-negative bacteria. This is 3-deoxy-manno-octulosonate cytidylyltransferase from Psychrobacter cryohalolentis (strain ATCC BAA-1226 / DSM 17306 / VKM B-2378 / K5).